Reading from the N-terminus, the 244-residue chain is Futalosine hydrolase (244 aa).

It belongs to the PNP/UDP phosphorylase family. Futalosine hydrolase subfamily.

It catalyses the reaction futalosine + H2O = dehypoxanthine futalosine + hypoxanthine. The protein operates within quinol/quinone metabolism; menaquinone biosynthesis. In terms of biological role, catalyzes the hydrolysis of futalosine (FL) to dehypoxanthine futalosine (DHFL) and hypoxanthine, a step in the biosynthesis of menaquinone (MK, vitamin K2). Cannot directly use aminodeoxyfutalosine (AFL) as a substrate. The polypeptide is Futalosine hydrolase (Acidothermus cellulolyticus (strain ATCC 43068 / DSM 8971 / 11B)).